The sequence spans 735 residues: DNA ligase 1 (735 aa).

A compositionally biased stretch (basic and acidic residues) spans 1–11 (MAGDKQGDKQA). A disordered region spans residues 1 to 23 (MAGDKQGDKQAETTSVPAEARER). Residues 48-52 (DAEFD), 97-98 (SL), and Glu-128 each bind NAD(+). The N6-AMP-lysine intermediate role is filled by Lys-130. Positions 151, 188, 305, and 329 each coordinate NAD(+). Residues Cys-423, Cys-426, Cys-442, and Cys-448 each coordinate Zn(2+). The BRCT domain occupies 643–732 (EGPRPLEGLT…PEAAADVALS (90 aa)).

This sequence belongs to the NAD-dependent DNA ligase family. LigA subfamily. Mg(2+) serves as cofactor. Requires Mn(2+) as cofactor.

It catalyses the reaction NAD(+) + (deoxyribonucleotide)n-3'-hydroxyl + 5'-phospho-(deoxyribonucleotide)m = (deoxyribonucleotide)n+m + AMP + beta-nicotinamide D-nucleotide.. In terms of biological role, DNA ligase that catalyzes the formation of phosphodiester linkages between 5'-phosphoryl and 3'-hydroxyl groups in double-stranded DNA using NAD as a coenzyme and as the energy source for the reaction. It is essential for DNA replication and repair of damaged DNA. This is DNA ligase 1 from Streptomyces coelicolor (strain ATCC BAA-471 / A3(2) / M145).